The chain runs to 189 residues: Ras-like protein rasG (189 aa).

10-17 (GGGGVGKS) contributes to the GTP binding site. Positions 32 to 40 (YDPTIEDSY) match the Effector region motif. GTP is bound by residues 57–61 (DTAGQ) and 116–119 (NKCD). Residues 169–189 (KGDSKPEKGKKKRPLKACTLL) are disordered. At C186 the chain carries Cysteine methyl ester. C186 carries S-geranylgeranyl cysteine lipidation. The propeptide at 187–189 (TLL) is removed in mature form.

This sequence belongs to the small GTPase superfamily. Ras family. As to quaternary structure, interacts with ripA.

The protein localises to the cell membrane. The enzyme catalyses GTP + H2O = GDP + phosphate + H(+). Its activity is regulated as follows. Alternates between an inactive form bound to GDP and an active form bound to GTP. Activated by a guanine nucleotide-exchange factor (GEF) and inactivated by a GTPase-activating protein (GAP). In terms of biological role, ras proteins bind GDP/GTP and possess intrinsic GTPase activity. The protein is Ras-like protein rasG (rasG) of Dictyostelium discoideum (Social amoeba).